Consider the following 123-residue polypeptide: Large ribosomal subunit protein uL24 (123 aa).

Positions 100-123 (RRPDGSTYKAERSVRISRKTGKEI) are disordered.

This sequence belongs to the universal ribosomal protein uL24 family. In terms of assembly, part of the 50S ribosomal subunit.

Functionally, one of two assembly initiator proteins, it binds directly to the 5'-end of the 23S rRNA, where it nucleates assembly of the 50S subunit. One of the proteins that surrounds the polypeptide exit tunnel on the outside of the subunit. This chain is Large ribosomal subunit protein uL24, found in Nocardioides sp. (strain ATCC BAA-499 / JS614).